A 1578-amino-acid chain; its full sequence is DNA-directed RNA polymerase subunit beta' (1578 aa).

Zn(2+)-binding residues include cysteine 101, cysteine 103, cysteine 115, and cysteine 118. 3 residues coordinate Mg(2+): aspartate 1286, aspartate 1288, and aspartate 1290.

This sequence belongs to the RNA polymerase beta' chain family. RpoC1 subfamily. In plastids the minimal PEP RNA polymerase catalytic core is composed of four subunits: alpha, beta, beta', and beta''. When a (nuclear-encoded) sigma factor is associated with the core the holoenzyme is formed, which can initiate transcription. It depends on Mg(2+) as a cofactor. The cofactor is Zn(2+).

It is found in the plastid. The protein localises to the chloroplast. The enzyme catalyses RNA(n) + a ribonucleoside 5'-triphosphate = RNA(n+1) + diphosphate. Its function is as follows. DNA-dependent RNA polymerase catalyzes the transcription of DNA into RNA using the four ribonucleoside triphosphates as substrates. The sequence is that of DNA-directed RNA polymerase subunit beta' from Tupiella akineta (Green alga).